A 232-amino-acid chain; its full sequence is Orotate phosphoribosyltransferase (232 aa).

Residues Arg-107, Lys-108, Lys-111, His-113, and 133–141 each bind 5-phospho-alpha-D-ribose 1-diphosphate; that span reads EDLTTAGGS. Thr-137 provides a ligand contact to orotate.

The protein belongs to the purine/pyrimidine phosphoribosyltransferase family. PyrE subfamily. In terms of assembly, homodimer. The cofactor is Mg(2+).

The enzyme catalyses orotidine 5'-phosphate + diphosphate = orotate + 5-phospho-alpha-D-ribose 1-diphosphate. Its pathway is pyrimidine metabolism; UMP biosynthesis via de novo pathway; UMP from orotate: step 1/2. In terms of biological role, catalyzes the transfer of a ribosyl phosphate group from 5-phosphoribose 1-diphosphate to orotate, leading to the formation of orotidine monophosphate (OMP). This chain is Orotate phosphoribosyltransferase, found in Sinorhizobium medicae (strain WSM419) (Ensifer medicae).